The sequence spans 192 residues: Orotate phosphoribosyltransferase (192 aa).

Glu-116–Ser-124 contacts 5-phospho-alpha-D-ribose 1-diphosphate. Orotate is bound by residues Thr-120 and Arg-148.

This sequence belongs to the purine/pyrimidine phosphoribosyltransferase family. PyrE subfamily. Homodimer. Mg(2+) serves as cofactor.

It carries out the reaction orotidine 5'-phosphate + diphosphate = orotate + 5-phospho-alpha-D-ribose 1-diphosphate. It participates in pyrimidine metabolism; UMP biosynthesis via de novo pathway; UMP from orotate: step 1/2. Functionally, catalyzes the transfer of a ribosyl phosphate group from 5-phosphoribose 1-diphosphate to orotate, leading to the formation of orotidine monophosphate (OMP). The chain is Orotate phosphoribosyltransferase from Bartonella bacilliformis (strain ATCC 35685 / KC583 / Herrer 020/F12,63).